Consider the following 360-residue polypeptide: Dual-specificity RNA methyltransferase RlmN (360 aa).

The active-site Proton acceptor is the E91. In terms of domain architecture, Radical SAM core spans 110–343; that stretch reads RSEKYTVCIS…CTIRESKGLD (234 aa). C117 and C348 are disulfide-bonded. Residues C124, C128, and C131 each coordinate [4Fe-4S] cluster. S-adenosyl-L-methionine contacts are provided by residues 174–175, S206, 229–231, and N305; these read GE and SLH. The S-methylcysteine intermediate role is filled by C348.

This sequence belongs to the radical SAM superfamily. RlmN family. [4Fe-4S] cluster serves as cofactor.

It localises to the cytoplasm. It catalyses the reaction adenosine(2503) in 23S rRNA + 2 reduced [2Fe-2S]-[ferredoxin] + 2 S-adenosyl-L-methionine = 2-methyladenosine(2503) in 23S rRNA + 5'-deoxyadenosine + L-methionine + 2 oxidized [2Fe-2S]-[ferredoxin] + S-adenosyl-L-homocysteine. The enzyme catalyses adenosine(37) in tRNA + 2 reduced [2Fe-2S]-[ferredoxin] + 2 S-adenosyl-L-methionine = 2-methyladenosine(37) in tRNA + 5'-deoxyadenosine + L-methionine + 2 oxidized [2Fe-2S]-[ferredoxin] + S-adenosyl-L-homocysteine. Its function is as follows. Specifically methylates position 2 of adenine 2503 in 23S rRNA and position 2 of adenine 37 in tRNAs. m2A2503 modification seems to play a crucial role in the proofreading step occurring at the peptidyl transferase center and thus would serve to optimize ribosomal fidelity. In Aliarcobacter butzleri (strain RM4018) (Arcobacter butzleri), this protein is Dual-specificity RNA methyltransferase RlmN.